The following is a 254-amino-acid chain: Ribosomal RNA small subunit methyltransferase J (254 aa).

S-adenosyl-L-methionine is bound by residues 107–108 (RD), 123–124 (ER), and aspartate 174.

Belongs to the methyltransferase superfamily. RsmJ family.

The protein localises to the cytoplasm. The catalysed reaction is guanosine(1516) in 16S rRNA + S-adenosyl-L-methionine = N(2)-methylguanosine(1516) in 16S rRNA + S-adenosyl-L-homocysteine + H(+). Its function is as follows. Specifically methylates the guanosine in position 1516 of 16S rRNA. This is Ribosomal RNA small subunit methyltransferase J from Coxiella burnetii (strain Dugway 5J108-111).